The sequence spans 66 residues: Cold shock-like protein CspLA (66 aa).

The CSD domain occupies 4–63 (GTVKWFNAEKGFGFIERENGDDVFVHFSAIQGDGFKSLDEGQAVTFDVEEGQRGPQAANV).

As to quaternary structure, homodimer.

It is found in the cytoplasm. This chain is Cold shock-like protein CspLA (cspLA), found in Listeria innocua serovar 6a (strain ATCC BAA-680 / CLIP 11262).